The sequence spans 914 residues: Isoleucine--tRNA ligase (914 aa).

A 'HIGH' region motif is present at residues 57–67; sequence PYANGQIHMGH. Glu-554 contributes to the L-isoleucyl-5'-AMP binding site. The 'KMSKS' region signature appears at 595–599; the sequence is KMSKS. Lys-598 lines the ATP pocket. Residues Cys-883, Cys-886, Cys-904, and Cys-907 each coordinate Zn(2+).

Belongs to the class-I aminoacyl-tRNA synthetase family. IleS type 1 subfamily. Monomer. Zn(2+) is required as a cofactor.

It is found in the cytoplasm. It carries out the reaction tRNA(Ile) + L-isoleucine + ATP = L-isoleucyl-tRNA(Ile) + AMP + diphosphate. Catalyzes the attachment of isoleucine to tRNA(Ile). As IleRS can inadvertently accommodate and process structurally similar amino acids such as valine, to avoid such errors it has two additional distinct tRNA(Ile)-dependent editing activities. One activity is designated as 'pretransfer' editing and involves the hydrolysis of activated Val-AMP. The other activity is designated 'posttransfer' editing and involves deacylation of mischarged Val-tRNA(Ile). This Macrococcus caseolyticus (strain JCSC5402) (Macrococcoides caseolyticum) protein is Isoleucine--tRNA ligase.